A 366-amino-acid polypeptide reads, in one-letter code: Structure-specific endonuclease subunit SLX1 (366 aa).

Residues 14-95 form the GIY-YIG domain; that stretch reads AFYCCYLLRS…QNTHATRHID (82 aa). 2 disordered regions span residues 31 to 59 and 102 to 124; these read IGST…SMQG and RAEE…KRPP. Basic residues predominate over residues 109–123; the sequence is GKKKATSPGRRRKRP. The SLX1-type zinc finger occupies 234–289; that stretch reads CGVCKNPADMSSSLILVCPIEACQTVSHLSCLSNKFLTEGGELETLVPLEGTCPGC. The tract at residues 317-366 is disordered; the sequence is KPKRKRKSDNPAESDAADGQALEQEDEELDETWMEDMSQDEEPSPVKKSR. Residues 339–359 show a composition bias toward acidic residues; the sequence is EQEDEELDETWMEDMSQDEEP.

It belongs to the SLX1 family. In terms of assembly, forms a heterodimer with SLX4. A divalent metal cation is required as a cofactor.

It localises to the nucleus. Functionally, catalytic subunit of the SLX1-SLX4 structure-specific endonuclease that resolves DNA secondary structures generated during DNA repair and recombination. Has endonuclease activity towards branched DNA substrates, introducing single-strand cuts in duplex DNA close to junctions with ss-DNA. The polypeptide is Structure-specific endonuclease subunit SLX1 (Phaeosphaeria nodorum (strain SN15 / ATCC MYA-4574 / FGSC 10173) (Glume blotch fungus)).